The following is a 400-amino-acid chain: Multidrug resistance protein MdtH (400 aa).

10 helical membrane passes run 13–33, 34–54, 99–116, 139–159, 165–185, 214–234, 244–264, 289–309, 340–360, and 365–385; these read YFLL…FPLI, SIRF…ALGL, PWIL…GTLF, LLLM…SWLL, LVCW…AWLL, VLTL…FPIV, AVKW…YPIA, FPVG…LFYL, LGLA…YDIG, and LPEL…YALH.

The protein belongs to the major facilitator superfamily. DHA1 family. MdtH (TC 2.A.1.2.21) subfamily.

Its subcellular location is the cell inner membrane. The sequence is that of Multidrug resistance protein MdtH from Proteus mirabilis (strain HI4320).